The sequence spans 427 residues: 3-phosphoshikimate 1-carboxyvinyltransferase (427 aa).

The 3-phosphoshikimate site is built by Lys-22, Ser-23, and Arg-27. Residue Lys-22 coordinates phosphoenolpyruvate. Phosphoenolpyruvate contacts are provided by Gly-96 and Arg-124. 3-phosphoshikimate is bound by residues Ser-169, Ser-170, Gln-171, Ser-197, Asp-313, Asn-336, and Lys-340. Gln-171 serves as a coordination point for phosphoenolpyruvate. Asp-313 (proton acceptor) is an active-site residue. Positions 344, 386, and 411 each coordinate phosphoenolpyruvate.

Belongs to the EPSP synthase family. As to quaternary structure, monomer.

It is found in the cytoplasm. It catalyses the reaction 3-phosphoshikimate + phosphoenolpyruvate = 5-O-(1-carboxyvinyl)-3-phosphoshikimate + phosphate. The protein operates within metabolic intermediate biosynthesis; chorismate biosynthesis; chorismate from D-erythrose 4-phosphate and phosphoenolpyruvate: step 6/7. Functionally, catalyzes the transfer of the enolpyruvyl moiety of phosphoenolpyruvate (PEP) to the 5-hydroxyl of shikimate-3-phosphate (S3P) to produce enolpyruvyl shikimate-3-phosphate and inorganic phosphate. The sequence is that of 3-phosphoshikimate 1-carboxyvinyltransferase from Salmonella typhimurium (strain LT2 / SGSC1412 / ATCC 700720).